The chain runs to 911 residues: Eukaryotic translation initiation factor 3 subunit C (911 aa).

The tract at residues 1 to 44 (MSRFFTTGSDSESESSLSGEELVTKPVSGNYGKQPLLLSEDEED) is disordered. Over residues 8-21 (GSDSESESSLSGEE) the composition is skewed to low complexity. Phosphoserine is present on residues Ser-9, Ser-11, Ser-13, Ser-15, Ser-16, Ser-18, and Ser-39. Lys-99 carries the post-translational modification N6-acetyllysine. Disordered stretches follow at residues 157–299 (TNYK…GGEW) and 520–540 (QLTPPEGSSKSEQDQAENEGE). 4 positions are modified to phosphoserine: Ser-166, Ser-178, Ser-181, and Ser-182. The segment covering 166–190 (SADEDAEKNEEDSEGSSDEDEDEDG) has biased composition (acidic residues). Residues 199–208 (KKQESSGESR) show a composition bias toward basic and acidic residues. Over residues 216–230 (DDDEDSEDSEDEEWD) the composition is skewed to acidic residues. Basic and acidic residues predominate over residues 259 to 276 (PTTEEDKKAAEKKREDKA). Polar residues predominate over residues 520 to 529 (QLTPPEGSSK). Residue Thr-522 is modified to Phosphothreonine. Lys-641 carries the post-translational modification N6-acetyllysine. A PCI domain is found at 671 to 847 (FHLHINLELL…QTVVMHRTEP (177 aa)). Residues 883–911 (FRDQKDGYRKNEGYMRRGGYRQQQSQTAY) form a disordered region. Residues 884-897 (RDQKDGYRKNEGYM) are compositionally biased toward basic and acidic residues. Residue Ser-907 is modified to Phosphoserine.

The protein belongs to the eIF-3 subunit C family. In terms of assembly, component of the eukaryotic translation initiation factor 3 (eIF-3) complex, which is composed of 13 subunits: EIF3A, EIF3B, EIF3C, EIF3D, EIF3E, EIF3F, EIF3G, EIF3H, EIF3I, EIF3J, EIF3K, EIF3L and EIF3M. The eIF-3 complex appears to include 3 stable modules: module A is composed of EIF3A, EIF3B, EIF3G and EIF3I; module B is composed of EIF3F, EIF3H, and EIF3M; and module C is composed of EIF3C, EIF3D, EIF3E, EIF3K and EIF3L. EIF3C of module C binds EIF3B of module A and EIF3H of module B, thereby linking the three modules. EIF3J is a labile subunit that binds to the eIF-3 complex via EIF3B. The eIF-3 complex may interact with RPS6KB1 under conditions of nutrient depletion. Mitogenic stimulation may lead to binding and activation of a complex composed of MTOR and RPTOR, leading to phosphorylation and release of RPS6KB1 and binding of EIF4B to eIF-3. Interacts with ALKBH4, IFIT1 and IFIT2. Interacts with BZW2/5MP1. Phosphorylated. Phosphorylation is enhanced upon serum stimulation.

It localises to the cytoplasm. Its function is as follows. Component of the eukaryotic translation initiation factor 3 (eIF-3) complex, which is required for several steps in the initiation of protein synthesis. The eIF-3 complex associates with the 40S ribosome and facilitates the recruitment of eIF-1, eIF-1A, eIF-2:GTP:methionyl-tRNAi and eIF-5 to form the 43S pre-initiation complex (43S PIC). The eIF-3 complex stimulates mRNA recruitment to the 43S PIC and scanning of the mRNA for AUG recognition. The eIF-3 complex is also required for disassembly and recycling of post-termination ribosomal complexes and subsequently prevents premature joining of the 40S and 60S ribosomal subunits prior to initiation. The eIF-3 complex specifically targets and initiates translation of a subset of mRNAs involved in cell proliferation, including cell cycling, differentiation and apoptosis, and uses different modes of RNA stem-loop binding to exert either translational activation or repression. This is Eukaryotic translation initiation factor 3 subunit C (Eif3c) from Mus musculus (Mouse).